Consider the following 555-residue polypeptide: CTP synthase (555 aa).

The interval 1 to 270 (MTKFVFVTGG…DGLICDKLRL (270 aa)) is amidoligase domain. A CTP-binding site is contributed by S13. S13 is a binding site for UTP. Residues 14–19 (SLGKGI) and D71 each bind ATP. Residues D71 and E144 each contribute to the Mg(2+) site. CTP is bound by residues 151–153 (DIE), 191–196 (KTKPTQ), and K227. Residues 191–196 (KTKPTQ) and K227 contribute to the UTP site. The region spanning 295 to 547 (NIVMVGKYVE…IKAALDHQAA (253 aa)) is the Glutamine amidotransferase type-1 domain. G356 lines the L-glutamine pocket. The Nucleophile; for glutamine hydrolysis role is filled by C383. L-glutamine-binding positions include 384 to 387 (LGMQ), E407, and R473. Residues H520 and E522 contribute to the active site.

It belongs to the CTP synthase family. In terms of assembly, homotetramer.

The catalysed reaction is UTP + L-glutamine + ATP + H2O = CTP + L-glutamate + ADP + phosphate + 2 H(+). It carries out the reaction L-glutamine + H2O = L-glutamate + NH4(+). The enzyme catalyses UTP + NH4(+) + ATP = CTP + ADP + phosphate + 2 H(+). It participates in pyrimidine metabolism; CTP biosynthesis via de novo pathway; CTP from UDP: step 2/2. Its activity is regulated as follows. Allosterically activated by GTP, when glutamine is the substrate; GTP has no effect on the reaction when ammonia is the substrate. The allosteric effector GTP functions by stabilizing the protein conformation that binds the tetrahedral intermediate(s) formed during glutamine hydrolysis. Inhibited by the product CTP, via allosteric rather than competitive inhibition. Catalyzes the ATP-dependent amination of UTP to CTP with either L-glutamine or ammonia as the source of nitrogen. Regulates intracellular CTP levels through interactions with the four ribonucleotide triphosphates. This Albidiferax ferrireducens (strain ATCC BAA-621 / DSM 15236 / T118) (Rhodoferax ferrireducens) protein is CTP synthase.